Here is a 368-residue protein sequence, read N- to C-terminus: Transmembrane protein 26 (368 aa).

The next 3 membrane-spanning stretches (helical) occupy residues 4 to 24 (LVFLNALATRLLFLLHSLVGV), 36 to 56 (YWLLALLNLLLFLETALTLKF), and 65 to 85 (FSPAIFLYLISIVPSLWLLEL). Asparagine 110 is a glycosylation site (N-linked (GlcNAc...) asparagine). A run of 5 helical transmembrane segments spans residues 150-170 (QTFLLMLIIGRWLLPIGGGIT), 177-197 (LLLMFVGTAADILEFTSETLE), 208-228 (VYAILVIWTWSMLQFPLDLAV), 257-277 (IGISVFIQDGPFLVVRLILMT), and 281-301 (VINQMLVFFAAKNFLVVVLQL). The interval 324–368 (GEHGCRAQTSESGPSQRDWQNESKEGLAIPLRGSPVTSDDSHHTP) is disordered. Polar residues predominate over residues 330 to 341 (AQTSESGPSQRD).

The protein localises to the membrane. In Homo sapiens (Human), this protein is Transmembrane protein 26 (TMEM26).